A 395-amino-acid polypeptide reads, in one-letter code: ATP phosphoribosyltransferase regulatory subunit (395 aa).

Belongs to the class-II aminoacyl-tRNA synthetase family. HisZ subfamily. Heteromultimer composed of HisG and HisZ subunits.

The protein resides in the cytoplasm. The protein operates within amino-acid biosynthesis; L-histidine biosynthesis; L-histidine from 5-phospho-alpha-D-ribose 1-diphosphate: step 1/9. Required for the first step of histidine biosynthesis. May allow the feedback regulation of ATP phosphoribosyltransferase activity by histidine. In Pseudomonas fluorescens (strain ATCC BAA-477 / NRRL B-23932 / Pf-5), this protein is ATP phosphoribosyltransferase regulatory subunit.